We begin with the raw amino-acid sequence, 349 residues long: Phosphoribosylformylglycinamidine cyclo-ligase (349 aa).

The protein belongs to the AIR synthase family.

It is found in the cytoplasm. The enzyme catalyses 2-formamido-N(1)-(5-O-phospho-beta-D-ribosyl)acetamidine + ATP = 5-amino-1-(5-phospho-beta-D-ribosyl)imidazole + ADP + phosphate + H(+). It participates in purine metabolism; IMP biosynthesis via de novo pathway; 5-amino-1-(5-phospho-D-ribosyl)imidazole from N(2)-formyl-N(1)-(5-phospho-D-ribosyl)glycinamide: step 2/2. This Bordetella avium (strain 197N) protein is Phosphoribosylformylglycinamidine cyclo-ligase.